Reading from the N-terminus, the 543-residue chain is Glutamyl-tRNA(Gln) amidotransferase subunit A, chloroplastic/mitochondrial (543 aa).

Catalysis depends on charge relay system residues lysine 123 and serine 198. The active-site Acyl-ester intermediate is the serine 222.

The protein belongs to the amidase family. GatA subfamily. Subunit of the heterotrimeric GatCAB amidotransferase (AdT) complex, composed of A, B and C subunits.

Its subcellular location is the mitochondrion. It is found in the plastid. The protein resides in the chloroplast stroma. The catalysed reaction is L-glutamyl-tRNA(Gln) + L-glutamine + ATP + H2O = L-glutaminyl-tRNA(Gln) + L-glutamate + ADP + phosphate + H(+). Functionally, allows the formation of correctly charged Gln-tRNA(Gln) through the transamidation of misacylated Glu-tRNA(Gln) in chloroplasts and mitochondria. The reaction takes place in the presence of glutamine and ATP through an activated gamma-phospho-Glu-tRNA(Gln). The sequence is that of Glutamyl-tRNA(Gln) amidotransferase subunit A, chloroplastic/mitochondrial from Oryza sativa subsp. japonica (Rice).